The chain runs to 170 residues: Tachykinin-4 (170 aa).

Positions Met1–Ser16 are cleaved as a signal peptide. Positions Thr17 to Leu54 are excised as a propeptide. Residue Met66 is modified to Methionine amide. Residues Gly67–Pro170 constitute a propeptide that is removed on maturation. Residues Gln107–Pro170 form a disordered region. Residues Ser123–Val140 are compositionally biased toward polar residues.

This sequence belongs to the tachykinin family.

The protein localises to the secreted. Functionally, tachykinins are active peptides which excite neurons, evoke behavioral responses, are potent vasodilators and secretagogues, and contract (directly or indirectly) many smooth muscles. Hemokinin induces plasma extravasation, mast cell degranulation, muscle contraction, salivary secretion and scratching behavior. Increases sperm motility. Induces potent analgesic effects and may play a role in pain modulation. Promotes survival of bone marrow B lineage cells and of cultured LPS-stimulated pre-B cells and may act as an autocrine factor required for B-cell survival and proliferation. Lowers systemic arterial pressure following intravenous injection. Induces interferon-gamma production and may play a role in the inflammatory response. Shows potent affinity and specificity for the NK-1 receptor. The sequence is that of Tachykinin-4 from Rattus norvegicus (Rat).